We begin with the raw amino-acid sequence, 138 residues long: MTLNLRVMAPNRIVWNSEVEEIVLSTNSGQIGVLPNHAPLLTALDIGIIKIRLNGEWSTMALMGGFAMIDNNGMTILVNEAEKATEINPQEARENYKMAQKDLAKAEGGKQKIEANLAFKRAKARLEAIDVISFPVSN.

Belongs to the ATPase epsilon chain family. As to quaternary structure, F-type ATPases have 2 components, CF(1) - the catalytic core - and CF(0) - the membrane proton channel. CF(1) has five subunits: alpha(3), beta(3), gamma(1), delta(1), epsilon(1). CF(0) has three main subunits: a, b and c.

The protein resides in the plastid. The protein localises to the chloroplast thylakoid membrane. Produces ATP from ADP in the presence of a proton gradient across the membrane. This chain is ATP synthase epsilon chain, chloroplastic, found in Anthoceros angustus (Hornwort).